The primary structure comprises 605 residues: ATP-dependent RNA helicase DBP3 (605 aa).

Residues 1 to 124 are disordered; that stretch reads MSAEELVASP…TPALSKKQQK (124 aa). A compositionally biased stretch (basic residues) spans 54–66; that stretch reads KDKKDKKEKKDKK. Positions 104–114 are enriched in polar residues; that stretch reads PVSTATPTESE. The Q motif motif lies at 175 to 201; sequence LSIRDLPINSKLQPFLNKFEKPTPIQA. The 188-residue stretch at 204-391 folds into the Helicase ATP-binding domain; it reads WPALLSKKDV…STFLNNPLRI (188 aa). Residue 217–224 coordinates ATP; sequence AETGSGKT. Residues 336 to 339 carry the DEAD box motif; that stretch reads DEAD. In terms of domain architecture, Helicase C-terminal spans 424-575; the sequence is HLKAHLKVHP…EIPKEMDRFP (152 aa).

The protein belongs to the DEAD box helicase family. DDX5/DBP2 subfamily.

It localises to the nucleus. The protein resides in the nucleolus. It carries out the reaction ATP + H2O = ADP + phosphate + H(+). Its function is as follows. ATP-dependent RNA helicase required for 60S ribosomal subunit synthesis. Involved in efficient pre-rRNA processing, predominantly at site A3, which is necessary for the normal formation of 25S and 5.8S rRNAs. The polypeptide is ATP-dependent RNA helicase DBP3 (DBP3) (Cryptococcus neoformans var. neoformans serotype D (strain JEC21 / ATCC MYA-565) (Filobasidiella neoformans)).